A 352-amino-acid polypeptide reads, in one-letter code: Protein CIA1 (352 aa).

7 WD repeats span residues 18–64 (GHTD…RSWT), 72–111 (THTR…FECI), 116–155 (GHEN…EYDC), 161–200 (GHTQ…GEYQ), 211–250 (GHSS…MQSG), 265–303 (YHDR…SVDG), and 315–352 (AHEN…ATKP).

This sequence belongs to the WD repeat CIA1 family. Part of a complex composed of AE7, CIA1, MMS19 and NAR1. Interacts with AE7 and NAR1.

The protein resides in the nucleus. It is found in the cytoplasm. Its function is as follows. Essential component of the cytosolic iron-sulfur (Fe-S) protein assembly (CIA) machinery. Required for the maturation of extramitochondrial Fe/S proteins. This chain is Protein CIA1, found in Arabidopsis thaliana (Mouse-ear cress).